The chain runs to 543 residues: uncharacterized protein (543 aa).

A PE domain is found at 1-93 (MSFVTAAPEM…GGAYSSAEAA (93 aa)). Residues 194 to 214 (GGAGGPGGPTDVPAGTGGAGG) form a disordered region.

The protein belongs to the mycobacterial PE family. PGRS subfamily.

This is an uncharacterized protein from Mycobacterium tuberculosis (strain CDC 1551 / Oshkosh).